The primary structure comprises 255 residues: 5'-nucleotidase SurE (255 aa).

Residues D8, D9, S40, and N93 each contribute to the a divalent metal cation site.

It belongs to the SurE nucleotidase family. A divalent metal cation serves as cofactor.

It localises to the cytoplasm. It carries out the reaction a ribonucleoside 5'-phosphate + H2O = a ribonucleoside + phosphate. In terms of biological role, nucleotidase that shows phosphatase activity on nucleoside 5'-monophosphates. The sequence is that of 5'-nucleotidase SurE from Bradyrhizobium sp. (strain ORS 278).